Reading from the N-terminus, the 793-residue chain is MDDFERRRELRRQKREEMRLEAERIAYQRNDDDEEEAARERRRRARQERLRQKQEEESLGQVTDQVEVNAQNSVPDEEAKTTTTNTQVEGDDEAAFLERLARREERRQKRLQEALERQKEFDPTITDASLSLPSRRMQNDTAENETTEKEEKSESRQERYEIEETETVTKSYQKNDWRDAEENKKEDKEKEEEEEEKPKRGSIGENQVEVMVEEKTTESQEETVVMSLKNGQISSEEPKQEEEREQGSDEISHHEKMEEEDKERAEAERARLEAEERERIKAEQDKKIADERARIEAEEKAAAQERERREAEERERMREEEKRAAEERQRIKEEEKRAAEERQRIKEEEKRAAEERQRIKEEEKRAAEERQRARAEEEEKAKVEEQKRNKQLEEKKHAMQETKIKGEKVEQKIEGKWVNEKKAQEDKLQTAVLKKQGEEKGTKVQAKREKLQEDKPTFKKEEIKDEKIKKDKEPKEEVKSFMDRKKGFTEVKSQNGEFMTHKLKHTENTFSRPGGRASVDTKEAEGAPQVEAGKRLEELRRRRGETESEEFEKLKQKQQEAALELEELKKKREERRKVLEEEEQRRKQEEADRKLREEEEKRRLKEEIERRRAEAAEKRQKMPEDGLSDDKKPFKCFTPKGSSLKIEERAEFLNKSVQKSSGVKSTHQAAIVSKIDSRLEQYTSAIEGTKSAKPTKPAASDLPVPAEGVRNIKSMWEKGNVFSSPTAAGTPNKETAGLKVGVSSRINEWLTKTPDGNKSPAPKPSDLRPGDVSSKRNLWEKQSVDKVTSPTKV.

Phosphoserine is present on Arg12. A Phosphotyrosine modification is found at Glu21. Disordered stretches follow at residues 26-94 (AYQR…DDEA), 108-407 (QKRL…IKGE), and 434-458 (KKQG…KPTF). The tract at residues 26-207 (AYQRNDDDEE…PKRGSIGENQ (182 aa)) is myosin and calmodulin-binding. A compositionally biased stretch (basic and acidic residues) spans 47-56 (QERLRQKQEE). A compositionally biased stretch (polar residues) spans 60 to 74 (GQVTDQVEVNAQNSV). Basic and acidic residues predominate over residues 108 to 122 (QKRLQEALERQKEFD). Position 129 is a phosphoserine (Ser129). Composition is skewed to basic and acidic residues over residues 146–162 (TTEK…RYEI) and 173–188 (QKND…KEDK). A phosphoserine mark is found at Glu196 and Ser202. Residues Ile203 and Glu209 each participate in a glycyl lysine isopeptide (Lys-Gly) (interchain with G-Cter in SUMO2) cross-link. Composition is skewed to basic and acidic residues over residues 236–407 (EEPK…IKGE) and 435–458 (KQGE…KPTF). Repeat copies occupy residues 319-332 (EEEK…QRIK), 333-346 (EEEK…QRIK), and 347-360 (EEEK…QRIK). Positions 319-375 (EEEKRAAEERQRIKEEEKRAAEERQRIKEEEKRAAEERQRIKEEEKRAAEERQRARA) are 3 X 14 AA tandem repeats of E-E-E-K-R-A-A-E-E-R-Q-R-I-K. Residue Lys459 forms a Glycyl lysine isopeptide (Lys-Gly) (interchain with G-Cter in SUMO2) linkage. The interval 492–640 (KSQNGEFMTH…KKPFKCFTPK (149 aa)) is disordered. Composition is skewed to basic and acidic residues over residues 532-558 (AGKR…KQKQ) and 566-633 (EELK…DKKP). The tract at residues 564 to 621 (ELEELKKKREERRKVLEEEEQRRKQEEADRKLREEEEKRRLKEEIERRRAEAAEKRQK) is tropomyosin-binding. Ser643 bears the Phosphoserine mark. Residue Lys645 forms a Glycyl lysine isopeptide (Lys-Gly) (interchain with G-Cter in SUMO2) linkage. Residues 653–686 (LNKSVQKSSGVKSTHQAAIVSKIDSRLEQYTSAI) form a strong actin-binding region. Ser656 bears the Phosphoserine mark. The segment at 664–674 (KSTHQAAIVSK) is tropomyosin-binding. Disordered stretches follow at residues 687 to 706 (EGTK…PVPA), 721 to 740 (VFSS…GLKV), and 747 to 793 (NEWL…PTKV). The segment at 716–722 (WEKGNVF) is calmodulin-binding. Positions 721–733 (VFSSPTAAGTPNK) are enriched in polar residues. At Ser724 the chain carries Phosphoserine. Thr730 and Thr753 each carry phosphothreonine. Residue Ser759 is modified to Phosphoserine. The span at 765 to 784 (SDLRPGDVSSKRNLWEKQSV) shows a compositional bias: basic and acidic residues. Residues 768 to 793 (RPGDVSSKRNLWEKQSVDKVTSPTKV) are weak actin-binding. The residue at position 789 (Ser789) is a Phosphoserine.

Belongs to the caldesmon family. In non-muscle cells, phosphorylation by CDK1 during mitosis causes caldesmon to dissociate from microfilaments. Phosphorylation reduces caldesmon binding to actin, myosin, and calmodulin as well as its inhibition of actomyosin ATPase activity. Phosphorylation also occurs in both quiescent and dividing smooth muscle cells with similar effects on the interaction with actin and calmodulin and on microfilaments reorganization. CDK1-mediated phosphorylation promotes Schwann cell migration during peripheral nerve regeneration. High-molecular-weight caldesmon (isoform 1) is predominantly expressed in smooth muscles, whereas low-molecular-weight caldesmon (isoforms 2, 3, 4 and 5) are widely distributed in non-muscle tissues and cells. Not expressed in skeletal muscle or heart.

It is found in the cytoplasm. It localises to the cytoskeleton. Its subcellular location is the myofibril. The protein localises to the stress fiber. In terms of biological role, actin- and myosin-binding protein implicated in the regulation of actomyosin interactions in smooth muscle and nonmuscle cells (could act as a bridge between myosin and actin filaments). Stimulates actin binding of tropomyosin which increases the stabilization of actin filament structure. In muscle tissues, inhibits the actomyosin ATPase by binding to F-actin. This inhibition is attenuated by calcium-calmodulin and is potentiated by tropomyosin. Interacts with actin, myosin, two molecules of tropomyosin and with calmodulin. Also plays an essential role during cellular mitosis and receptor capping. Involved in Schwann cell migration during peripheral nerve regeneration. This Homo sapiens (Human) protein is Caldesmon (CALD1).